Here is a 152-residue protein sequence, read N- to C-terminus: SsrA-binding protein (152 aa).

The protein belongs to the SmpB family.

Its subcellular location is the cytoplasm. Functionally, required for rescue of stalled ribosomes mediated by trans-translation. Binds to transfer-messenger RNA (tmRNA), required for stable association of tmRNA with ribosomes. tmRNA and SmpB together mimic tRNA shape, replacing the anticodon stem-loop with SmpB. tmRNA is encoded by the ssrA gene; the 2 termini fold to resemble tRNA(Ala) and it encodes a 'tag peptide', a short internal open reading frame. During trans-translation Ala-aminoacylated tmRNA acts like a tRNA, entering the A-site of stalled ribosomes, displacing the stalled mRNA. The ribosome then switches to translate the ORF on the tmRNA; the nascent peptide is terminated with the 'tag peptide' encoded by the tmRNA and targeted for degradation. The ribosome is freed to recommence translation, which seems to be the essential function of trans-translation. This Rickettsia felis (strain ATCC VR-1525 / URRWXCal2) (Rickettsia azadi) protein is SsrA-binding protein.